The primary structure comprises 218 residues: MTPVLYYLPPSPPCRSVLLLAKMIGVELELKALNVMEGEQLKPDFVELNPQHCIPTLDDHGLVLWESRVILAYLVSAYGKDENLYPKDFRSRAIVDQRLHFDLGTLYQRVVDYYFPTIQLGAHLDQTKKAKLAEALGWFEAMLKQYQWSAANHFTIADIALCVTVSQIEAFQFDLHPYPRVRAWLQKCKDELQGHGYKEINETGAETLAGLFRSKLKQ.

A GST N-terminal domain is found at 1–82 (MTPVLYYLPP…YLVSAYGKDE (82 aa)). Glutathione contacts are provided by residues serine 11, 52-54 (HCI), and 66-68 (ESR). The GST C-terminal domain maps to 88 to 207 (DFRSRAIVDQ…KEINETGAET (120 aa)).

The protein belongs to the GST superfamily. Theta family. Homodimer.

The enzyme catalyses RX + glutathione = an S-substituted glutathione + a halide anion + H(+). Functionally, conjugation of reduced glutathione to a wide number of exogenous and endogenous hydrophobic electrophiles. The protein is Glutathione S-transferase D7 of Anopheles gambiae (African malaria mosquito).